Consider the following 206-residue polypeptide: Small ribosomal subunit protein uS4 (206 aa).

Residues 93–156 enclose the S4 RNA-binding domain; it reads CRLDNLVYRL…RKIKIIAEAL (64 aa).

Belongs to the universal ribosomal protein uS4 family. As to quaternary structure, part of the 30S ribosomal subunit. Contacts protein S5. The interaction surface between S4 and S5 is involved in control of translational fidelity.

Functionally, one of the primary rRNA binding proteins, it binds directly to 16S rRNA where it nucleates assembly of the body of the 30S subunit. Its function is as follows. With S5 and S12 plays an important role in translational accuracy. This Protochlamydia amoebophila (strain UWE25) protein is Small ribosomal subunit protein uS4.